An 863-amino-acid polypeptide reads, in one-letter code: Leucine--tRNA ligase (863 aa).

Residues 40–51 (PYPSGAGLHVGH) carry the 'HIGH' region motif. Residues 635–639 (KMSKS) carry the 'KMSKS' region motif. K638 lines the ATP pocket.

This sequence belongs to the class-I aminoacyl-tRNA synthetase family.

The protein resides in the cytoplasm. It catalyses the reaction tRNA(Leu) + L-leucine + ATP = L-leucyl-tRNA(Leu) + AMP + diphosphate. This chain is Leucine--tRNA ligase, found in Leptospira interrogans serogroup Icterohaemorrhagiae serovar Lai (strain 56601).